Consider the following 291-residue polypeptide: Protease HtpX homolog (291 aa).

The next 2 helical transmembrane spans lie at 4–24 (IVLFLATNLAIVLVLSLTMRL) and 39–59 (TSLLIFAAVMGFGGSLISLAI). Histidine 145 provides a ligand contact to Zn(2+). Residue glutamate 146 is part of the active site. Histidine 149 serves as a coordination point for Zn(2+). 2 helical membrane passes run 156–176 (VTLALIQGVVNTFVMFLSRII) and 195–215 (FFVTMIVAELVLGILASIIVM). Position 222 (glutamate 222) interacts with Zn(2+).

The protein belongs to the peptidase M48B family. Requires Zn(2+) as cofactor.

It is found in the cell inner membrane. The chain is Protease HtpX homolog from Thiobacillus denitrificans (strain ATCC 25259 / T1).